The chain runs to 284 residues: Diaminopimelate epimerase (284 aa).

N20, Q53, and N73 together coordinate substrate. C82 functions as the Proton donor in the catalytic mechanism. Substrate contacts are provided by residues 83 to 84 (GN), N167, N200, and 218 to 219 (ER). The Proton acceptor role is filled by C227. 228–229 (GS) serves as a coordination point for substrate.

Belongs to the diaminopimelate epimerase family. As to quaternary structure, homodimer.

The protein localises to the cytoplasm. It carries out the reaction (2S,6S)-2,6-diaminopimelate = meso-2,6-diaminopimelate. The protein operates within amino-acid biosynthesis; L-lysine biosynthesis via DAP pathway; DL-2,6-diaminopimelate from LL-2,6-diaminopimelate: step 1/1. Functionally, catalyzes the stereoinversion of LL-2,6-diaminopimelate (L,L-DAP) to meso-diaminopimelate (meso-DAP), a precursor of L-lysine and an essential component of the bacterial peptidoglycan. The polypeptide is Diaminopimelate epimerase (Xylella fastidiosa (strain M23)).